The following is a 360-amino-acid chain: Biotin synthase (360 aa).

The Radical SAM core domain maps to 83–315 (FCGKYFDLCT…KSFLRYCGGR (233 aa)). Residues C101, C105, and C108 each coordinate [4Fe-4S] cluster. 4 residues coordinate [2Fe-2S] cluster: S145, C180, C240, and R310.

It belongs to the radical SAM superfamily. Biotin synthase family. In terms of assembly, homodimer. The cofactor is [4Fe-4S] cluster. [2Fe-2S] cluster serves as cofactor.

The enzyme catalyses (4R,5S)-dethiobiotin + (sulfur carrier)-SH + 2 reduced [2Fe-2S]-[ferredoxin] + 2 S-adenosyl-L-methionine = (sulfur carrier)-H + biotin + 2 5'-deoxyadenosine + 2 L-methionine + 2 oxidized [2Fe-2S]-[ferredoxin]. Its pathway is cofactor biosynthesis; biotin biosynthesis; biotin from 7,8-diaminononanoate: step 2/2. In terms of biological role, catalyzes the conversion of dethiobiotin (DTB) to biotin by the insertion of a sulfur atom into dethiobiotin via a radical-based mechanism. In Fusobacterium nucleatum subsp. nucleatum (strain ATCC 25586 / DSM 15643 / BCRC 10681 / CIP 101130 / JCM 8532 / KCTC 2640 / LMG 13131 / VPI 4355), this protein is Biotin synthase.